The primary structure comprises 365 residues: tRNA(Met) cytidine acetate ligase (365 aa).

ATP is bound by residues 7–20 (IAEFNPFHNGHKYL), glycine 96, asparagine 152, and arginine 175.

This sequence belongs to the TmcAL family.

It localises to the cytoplasm. It catalyses the reaction cytidine(34) in elongator tRNA(Met) + acetate + ATP = N(4)-acetylcytidine(34) in elongator tRNA(Met) + AMP + diphosphate. In terms of biological role, catalyzes the formation of N(4)-acetylcytidine (ac(4)C) at the wobble position of elongator tRNA(Met), using acetate and ATP as substrates. First activates an acetate ion to form acetyladenylate (Ac-AMP) and then transfers the acetyl group to tRNA to form ac(4)C34. This is tRNA(Met) cytidine acetate ligase from Streptococcus pneumoniae serotype 4 (strain ATCC BAA-334 / TIGR4).